Reading from the N-terminus, the 245-residue chain is Adenosylcobinamide-GDP ribazoletransferase (245 aa).

5 helical membrane-spanning segments follow: residues 31–51 (FGRA…VLYA), 61–81 (PLLQ…ALHL), 113–133 (VAVV…AALL), 138–158 (AGLL…LFLT), and 192–212 (LAFG…FAWL).

This sequence belongs to the CobS family. The cofactor is Mg(2+).

The protein localises to the cell inner membrane. The enzyme catalyses alpha-ribazole + adenosylcob(III)inamide-GDP = adenosylcob(III)alamin + GMP + H(+). It carries out the reaction alpha-ribazole 5'-phosphate + adenosylcob(III)inamide-GDP = adenosylcob(III)alamin 5'-phosphate + GMP + H(+). Its pathway is cofactor biosynthesis; adenosylcobalamin biosynthesis; adenosylcobalamin from cob(II)yrinate a,c-diamide: step 7/7. Functionally, joins adenosylcobinamide-GDP and alpha-ribazole to generate adenosylcobalamin (Ado-cobalamin). Also synthesizes adenosylcobalamin 5'-phosphate from adenosylcobinamide-GDP and alpha-ribazole 5'-phosphate. The polypeptide is Adenosylcobinamide-GDP ribazoletransferase (Pseudomonas aeruginosa (strain ATCC 15692 / DSM 22644 / CIP 104116 / JCM 14847 / LMG 12228 / 1C / PRS 101 / PAO1)).